Consider the following 93-residue polypeptide: Pyrimidine/purine nucleoside phosphorylase (93 aa).

Belongs to the nucleoside phosphorylase PpnP family.

It catalyses the reaction a purine D-ribonucleoside + phosphate = a purine nucleobase + alpha-D-ribose 1-phosphate. The enzyme catalyses adenosine + phosphate = alpha-D-ribose 1-phosphate + adenine. It carries out the reaction cytidine + phosphate = cytosine + alpha-D-ribose 1-phosphate. The catalysed reaction is guanosine + phosphate = alpha-D-ribose 1-phosphate + guanine. It catalyses the reaction inosine + phosphate = alpha-D-ribose 1-phosphate + hypoxanthine. The enzyme catalyses thymidine + phosphate = 2-deoxy-alpha-D-ribose 1-phosphate + thymine. It carries out the reaction uridine + phosphate = alpha-D-ribose 1-phosphate + uracil. The catalysed reaction is xanthosine + phosphate = alpha-D-ribose 1-phosphate + xanthine. Catalyzes the phosphorolysis of diverse nucleosides, yielding D-ribose 1-phosphate and the respective free bases. Can use uridine, adenosine, guanosine, cytidine, thymidine, inosine and xanthosine as substrates. Also catalyzes the reverse reactions. The sequence is that of Pyrimidine/purine nucleoside phosphorylase from Pseudomonas aeruginosa (strain LESB58).